A 144-amino-acid polypeptide reads, in one-letter code: Snake venom vascular endothelial growth factor toxin cratrin (144 aa).

An N-terminal signal peptide occupies residues 1-24 (MAVYLLAVAILFCIQGWPSGTVQG). At Q25 the chain carries Pyrrolidone carboxylic acid. 3 disulfide bridges follow: C38–C80, C69–C115, and C73–C117. Residues 119 to 144 (PRSTVNNGKRKKNPKEGEPRAKFPLV) form a disordered region. Positions 132-144 (PKEGEPRAKFPLV) are enriched in basic and acidic residues.

This sequence belongs to the PDGF/VEGF growth factor family. Snake venom VEGF subfamily. As to quaternary structure, homodimer; disulfide-linked. Interacts with VEGF receptor-1 (FLT1) with a high affinity, whereas it binds to VEGF receptor-2 (KDR) with a low affinity. Does not bind VEGF receptor-3 (FLT4). In terms of tissue distribution, expressed by the venom gland.

It localises to the secreted. Functionally, snake venom VEGFs that may contribute to venom dispersion and prey subjugation by inducing vascular permeability and hypotension. This protein induces an increase in capillary permeability after intradermal injection, as well as a drastic hypotensive effect after intravenous injection. The hypotension is mediated by nitric oxide (NO), which is produced by VEGF-activated endothelium NO synthase. Also induces angiogenesis in vitro. Like other crotalid VEGFs, this protein interacts with VEGF receptor-1 (FLT1) with a high affinity, whereas it binds to VEGF receptor-2 (KDR) with a low affinity. The chain is Snake venom vascular endothelial growth factor toxin cratrin from Crotalus atrox (Western diamondback rattlesnake).